The chain runs to 272 residues: Phosphate import ATP-binding protein PstB 1 (272 aa).

In terms of domain architecture, ABC transporter spans 26–267 (ISIENLNLFY…PMKKQTEDYI (242 aa)). 58–65 (GPSGCGKS) is a binding site for ATP.

Belongs to the ABC transporter superfamily. Phosphate importer (TC 3.A.1.7) family. The complex is composed of two ATP-binding proteins (PstB), two transmembrane proteins (PstC and PstA) and a solute-binding protein (PstS).

The protein localises to the cell inner membrane. The catalysed reaction is phosphate(out) + ATP + H2O = ADP + 2 phosphate(in) + H(+). Functionally, part of the ABC transporter complex PstSACB involved in phosphate import. Responsible for energy coupling to the transport system. The protein is Phosphate import ATP-binding protein PstB 1 of Vibrio parahaemolyticus serotype O3:K6 (strain RIMD 2210633).